Here is a 303-residue protein sequence, read N- to C-terminus: Glycosyltransferase AglJ (303 aa).

Helical transmembrane passes span 230 to 250 (FYFGSVGFASTATGLGLALYV) and 263 to 283 (VIAVVSMAGILFGVQLLMFGV).

Belongs to the glycosyltransferase 2 family.

It is found in the cell membrane. The protein operates within cell surface structure biogenesis; S-layer biogenesis. In terms of biological role, involved in the assembly of a N-linked pentasaccharide that decorates the S-layer glycoprotein and flagellins. Adds the first hexose subunit of the pentasaccharide to the dolichol phosphate carrier. This chain is Glycosyltransferase AglJ (aglJ), found in Haloferax volcanii (strain ATCC 29605 / DSM 3757 / JCM 8879 / NBRC 14742 / NCIMB 2012 / VKM B-1768 / DS2) (Halobacterium volcanii).